The primary structure comprises 445 residues: Phosphoglucosamine mutase (445 aa).

S102 (phosphoserine intermediate) is an active-site residue. Mg(2+)-binding residues include S102, D241, D243, and D245. S102 carries the post-translational modification Phosphoserine.

The protein belongs to the phosphohexose mutase family. Mg(2+) is required as a cofactor. Post-translationally, activated by phosphorylation.

The enzyme catalyses alpha-D-glucosamine 1-phosphate = D-glucosamine 6-phosphate. Catalyzes the conversion of glucosamine-6-phosphate to glucosamine-1-phosphate. The protein is Phosphoglucosamine mutase of Klebsiella pneumoniae (strain 342).